We begin with the raw amino-acid sequence, 150 residues long: Large-conductance mechanosensitive channel (150 aa).

A run of 2 helical transmembrane segments spans residues Val14 to Phe34 and Gly81 to Val101.

This sequence belongs to the MscL family. In terms of assembly, homopentamer.

It is found in the cell membrane. Functionally, channel that opens in response to stretch forces in the membrane lipid bilayer. May participate in the regulation of osmotic pressure changes within the cell. This chain is Large-conductance mechanosensitive channel, found in Syntrophomonas wolfei subsp. wolfei (strain DSM 2245B / Goettingen).